The following is a 263-amino-acid chain: Interleukin-15 receptor subunit alpha (263 aa).

Residues 1 to 32 (MASPQLRGYGVQAIPVLLLLLLLLLLPLRVTP) form the signal peptide. At 33 to 205 (GTTCPPPVSI…ISPHSSKMTK (173 aa)) the chain is on the extracellular side. In terms of domain architecture, Sushi spans 34–98 (TTCPPPVSIE…WTTPSLKCIR (65 aa)). Cystine bridges form between C36–C78 and C62–C96. The N-linked (GlcNAc...) asparagine glycan is linked to N51. Over residues 113 to 135 (TPKVTSQPESPSPSAKEPEAFSP) the composition is skewed to low complexity. The segment at 113–178 (TPKVTSQPES…HKSSRAPSLA (66 aa)) is disordered. Over residues 136-145 (KSDTAMTTET) the composition is skewed to polar residues. Residues 154 to 169 (TPSQTTSAGTTGTGSH) are compositionally biased toward low complexity. A helical transmembrane segment spans residues 206–226 (VAISTSVLLVGAGVVMAFLAW). The Cytoplasmic portion of the chain corresponds to 227 to 263 (YIKSRQPSQPCRVEVETMETVPMTVRASSKEDEDTGA).

As to quaternary structure, the interleukin-15 receptor IL15R is a heterotrimer of IL15RA, IL2RB and IL2RG. IL15RA also self-associates. Interacts with SYK. In terms of processing, N-glycosylated and O-glycosylated. Post-translationally, a soluble form (sIL-15RA) arises from proteolytic shedding of the membrane-anchored receptor. It also binds IL15 and thus interferes with IL15 binding to the membrane receptor. In terms of tissue distribution, widely expressed.

The protein resides in the membrane. The protein localises to the nucleus membrane. Its subcellular location is the cell surface. It is found in the secreted. It localises to the extracellular space. In terms of biological role, high-affinity receptor for interleukin-15. Can signal both in cis and trans where IL15R from one subset of cells presents IL15 to neighboring IL2RG-expressing cells. In neutrophils, binds and activates kinase SYK in response to IL15 stimulation. In neutrophils, required for IL15-induced phagocytosis in a SYK-dependent manner. In Mus musculus (Mouse), this protein is Interleukin-15 receptor subunit alpha (Il15ra).